The sequence spans 388 residues: Succinate--CoA ligase [ADP-forming] subunit beta (388 aa).

An ATP-grasp domain is found at 9–244 (KEILRKFGVA…LDEEDPAEIE (236 aa)). Residues lysine 46, 53-55 (GRG), glutamate 99, alanine 102, and glutamate 107 contribute to the ATP site. Residues asparagine 199 and aspartate 213 each coordinate Mg(2+). Residues asparagine 264 and 321 to 323 (GIM) each bind substrate.

This sequence belongs to the succinate/malate CoA ligase beta subunit family. As to quaternary structure, heterotetramer of two alpha and two beta subunits. Requires Mg(2+) as cofactor.

It catalyses the reaction succinate + ATP + CoA = succinyl-CoA + ADP + phosphate. It carries out the reaction GTP + succinate + CoA = succinyl-CoA + GDP + phosphate. It functions in the pathway carbohydrate metabolism; tricarboxylic acid cycle; succinate from succinyl-CoA (ligase route): step 1/1. Functionally, succinyl-CoA synthetase functions in the citric acid cycle (TCA), coupling the hydrolysis of succinyl-CoA to the synthesis of either ATP or GTP and thus represents the only step of substrate-level phosphorylation in the TCA. The beta subunit provides nucleotide specificity of the enzyme and binds the substrate succinate, while the binding sites for coenzyme A and phosphate are found in the alpha subunit. The protein is Succinate--CoA ligase [ADP-forming] subunit beta of Burkholderia mallei (strain NCTC 10247).